A 386-amino-acid chain; its full sequence is Decapping nuclease RAI1 (386 aa).

Substrate is bound at residue arginine 34. Glutamate 159 contributes to the a divalent metal cation binding site. A substrate-binding site is contributed by glutamate 205. A divalent metal cation is bound by residues aspartate 207, glutamate 225, and leucine 226. 2 residues coordinate substrate: lysine 227 and glutamine 251.

Belongs to the DXO/Dom3Z family. Interacts with RAT1; the interaction is direct, stabilizes RAT1 protein structure and stimulates its exoribonuclease activity. The interaction also stimulates RAI1 pyrophosphohydrolase activity, probably by recruiting it to mRNA substrates. The cofactor is a divalent metal cation.

It is found in the nucleus. The enzyme catalyses a 5'-end NAD(+)-phospho-ribonucleoside in mRNA + H2O = a 5'-end phospho-ribonucleoside in mRNA + NAD(+) + H(+). It catalyses the reaction a 5'-end (N(7)-methyl 5'-triphosphoguanosine)-ribonucleoside-ribonucleotide in mRNA + H2O = a (N(7)-methyl 5'-triphosphoguanosine)-nucleoside + a 5'-end phospho-ribonucleoside in mRNA + H(+). The catalysed reaction is a 5'-end triphospho-ribonucleoside in mRNA + H2O = a 5'-end phospho-ribonucleoside in mRNA + diphosphate + H(+). Its function is as follows. Decapping enzyme for NAD-capped RNAs: specifically hydrolyzes the nicotinamide adenine dinucleotide (NAD) cap from a subset of RNAs by removing the entire NAD moiety from the 5'-end of an NAD-capped RNA. The NAD-cap is present at the 5'-end of some RNAs and snoRNAs. In contrast to the canonical 5'-end N7 methylguanosine (m7G) cap, the NAD cap promotes mRNA decay. Also acts as a non-canonical decapping enzyme that removes the entire cap structure of m7G capped or incompletely capped RNAs. Has decapping activity toward incomplete 5'-end m7G cap mRNAs such as unmethylated 5'-end-capped RNA (cap0), while it has no activity toward 2'-O-ribose methylated m7G cap (cap1). Also possesses RNA 5'-pyrophosphohydrolase activity by hydrolyzing the 5'-end triphosphate to release pyrophosphates. Stimulates exoribonuclease activity of Rat1, allowing it to degrade RNAs with stable secondary structure more effectively. This Cryptococcus neoformans var. neoformans serotype D (strain B-3501A) (Filobasidiella neoformans) protein is Decapping nuclease RAI1 (RAI1).